A 31-amino-acid chain; its full sequence is Cytochrome b6-f complex subunit 6 (31 aa).

A helical transmembrane segment spans residues 4-26; that stretch reads ITSYFGFLLAALTVTSALFIGLS.

It belongs to the PetL family. As to quaternary structure, the 4 large subunits of the cytochrome b6-f complex are cytochrome b6, subunit IV (17 kDa polypeptide, PetD), cytochrome f and the Rieske protein, while the 4 small subunits are PetG, PetL, PetM and PetN. The complex functions as a dimer.

The protein localises to the plastid. It is found in the chloroplast thylakoid membrane. Its function is as follows. Component of the cytochrome b6-f complex, which mediates electron transfer between photosystem II (PSII) and photosystem I (PSI), cyclic electron flow around PSI, and state transitions. PetL is important for photoautotrophic growth as well as for electron transfer efficiency and stability of the cytochrome b6-f complex. The chain is Cytochrome b6-f complex subunit 6 from Daucus carota (Wild carrot).